Here is a 706-residue protein sequence, read N- to C-terminus: Coiled-coil domain-containing protein 177 (706 aa).

Positions 1–11 (MVDPVPEEEKE) are enriched in acidic residues. 3 disordered regions span residues 1 to 63 (MVDP…GGRR), 179 to 262 (ASAL…LREL), and 268 to 287 (ASAR…NPLG). 2 stretches are compositionally biased toward low complexity: residues 28 to 49 (PPDA…AAAP) and 179 to 209 (ASAL…RRTS). Positions 210 to 221 (PSPPARSRPPPA) are enriched in pro residues. The span at 242–257 (ALSSESGASSSSYSGE) shows a compositional bias: low complexity. The residue at position 310 (Ser-310) is a Phosphoserine. Positions 360–624 (AAHGQWEQQR…QTRLEKERAQ (265 aa)) form a coiled coil. Disordered stretches follow at residues 364 to 386 (QWEQ…KQRA), 398 to 425 (VEER…RSEE), 448 to 580 (DDRL…EREH), and 651 to 706 (ERSE…LDRK). Residues 368–386 (QRVRAEQRREREEREKQRA) are compositionally biased toward basic and acidic residues. Composition is skewed to basic and acidic residues over residues 448–529 (DDRL…REGL), 548–580 (QEQR…EREH), and 651–663 (ERSE…RRSA). Low complexity predominate over residues 664–674 (LESARSTARAS). Residues 676 to 706 (HVREKVREETNTRSFDRMVREAQLHASLDRK) show a composition bias toward basic and acidic residues.

This is Coiled-coil domain-containing protein 177 (Ccdc177) from Mus musculus (Mouse).